A 284-amino-acid chain; its full sequence is MRLIIVSGRSGSGKSTALDVLEDSGFYCIDNLPAGLLPQLAENALINTELLQPKVAVSIDARNLPSHLMRFPELLEEARARHIQCDVLYLDADEEVLLKRFSETRRRHPLTNANRSLAEAIRVESDLLGPIADLADLKIDTTNLNLYQLRDSIKLRLLNQPEPGTAFLVESFGFKRGMPVDADLVFDVRCLPNPYWKPELREHSGLDQPVIDYLAAQPDVEDMYNDISSYLLKWLPRFAASNRAYVTIAIGCTGGHHRSVYITERLGQQLQQTLKNVQVRHRDL.

An ATP-binding site is contributed by 8–15 (GRSGSGKS). 60–63 (DARN) contacts GTP.

It belongs to the RapZ-like family.

Displays ATPase and GTPase activities. The chain is Nucleotide-binding protein Pput_0988 from Pseudomonas putida (strain ATCC 700007 / DSM 6899 / JCM 31910 / BCRC 17059 / LMG 24140 / F1).